Consider the following 393-residue polypeptide: Phosphopentomutase (393 aa).

The Mn(2+) site is built by Asp14, Asp287, His292, Asp328, His329, and His340.

It belongs to the phosphopentomutase family. The cofactor is Mn(2+).

It is found in the cytoplasm. It carries out the reaction 2-deoxy-alpha-D-ribose 1-phosphate = 2-deoxy-D-ribose 5-phosphate. The catalysed reaction is alpha-D-ribose 1-phosphate = D-ribose 5-phosphate. It functions in the pathway carbohydrate degradation; 2-deoxy-D-ribose 1-phosphate degradation; D-glyceraldehyde 3-phosphate and acetaldehyde from 2-deoxy-alpha-D-ribose 1-phosphate: step 1/2. Functionally, isomerase that catalyzes the conversion of deoxy-ribose 1-phosphate (dRib-1-P) and ribose 1-phosphate (Rib-1-P) to deoxy-ribose 5-phosphate (dRib-5-P) and ribose 5-phosphate (Rib-5-P), respectively. The protein is Phosphopentomutase of Geobacillus stearothermophilus (Bacillus stearothermophilus).